Reading from the N-terminus, the 111-residue chain is MVRTKADSVPGTYRKVVAARAPRKVLGSSTSATNSTSVSSRKAENKYAGGNPVCVRPTPKWQKGIGEFFRLSPKDSEKENQIPEEAGSSGLGKAKRKACPLQPDHTNDEKE.

S8 bears the Phosphoserine mark. A Glycyl lysine isopeptide (Lys-Gly) (interchain with G-Cter in ubiquitin) cross-link involves residue K15. The D-box motif lies at 23–34 (RKVLGSSTSATN). The disordered stretch occupies residues 23–111 (RKVLGSSTSA…QPDHTNDEKE (89 aa)). K24 bears the N6-acetyllysine; alternate mark. Residue K24 forms a Glycyl lysine isopeptide (Lys-Gly) (interchain with G-Cter in ubiquitin); alternate linkage. S28, S31, and S72 each carry phosphoserine. A compositionally biased stretch (low complexity) spans 28-40 (SSTSATNSTSVSS). A PIP-box motif is present at residues 62 to 72 (QKGIGEFFRLS). A compositionally biased stretch (basic and acidic residues) spans 72–81 (SPKDSEKENQ). Residues 78–80 (KEN) carry the KEN box motif. The Initiation motif motif lies at 85–97 (EAGSSGLGKAKRK).

In terms of assembly, interacts (when monoubiquitinated at Lys-15 and Lys-24) with PCNA. Interacts with isoform 2/p33ING1b of ING1. Interacts with BRCA1. In terms of processing, monoubiquitinated at Lys-15 and Lys-24 during normal S phase, promoting its association with PCNA. Also diubiquitinated at these 2 sites. Following DNA damage, monoubiquitin chains at Lys-15 and Lys-24 are probably extended, leading to disrupt the interaction with PCNA. Polyubiquitinated by the APC/C complex at the mitotic exit, leading to its degradation by the proteasome. In terms of tissue distribution, expressed predominantly in liver, pancreas and placenta. Not detected in heart or brain. Highly expressed in a number of tumors, especially esophageal tumors, in anaplastic thyroid carcinomas, adrenocortical carcinomas, and in non-small-cell lung cancer lines.

It localises to the nucleus. The protein resides in the cytoplasm. Its subcellular location is the perinuclear region. Its function is as follows. PCNA-binding protein that acts as a regulator of DNA repair during DNA replication. Following DNA damage, the interaction with PCNA is disrupted, facilitating the interaction between monoubiquitinated PCNA and the translesion DNA synthesis DNA polymerase eta (POLH) at stalled replisomes, facilitating the bypass of replication-fork-blocking lesions. Also acts as a regulator of centrosome number. The protein is PCNA-associated factor of Homo sapiens (Human).